Here is a 674-residue protein sequence, read N- to C-terminus: UvrABC system protein B (674 aa).

The 389-residue stretch at 26–414 (EGLDSGLAHQ…SGNDIAEQVV (389 aa)) folds into the Helicase ATP-binding domain. 39-46 (GVTGSGKT) contacts ATP. A Beta-hairpin motif is present at residues 92–115 (YYDYYQPEAYVPTTDTFIEKDASV). The region spanning 432 to 586 (QVDDLLSEIR…ALHNKKNGIT (155 aa)) is the Helicase C-terminal domain. Residues 634 to 669 (ELEIQRLETEMYDLAQNLEFEKAAEARDKIHTLRQQ) form the UVR domain.

This sequence belongs to the UvrB family. In terms of assembly, forms a heterotetramer with UvrA during the search for lesions. Interacts with UvrC in an incision complex.

The protein resides in the cytoplasm. Its function is as follows. The UvrABC repair system catalyzes the recognition and processing of DNA lesions. A damage recognition complex composed of 2 UvrA and 2 UvrB subunits scans DNA for abnormalities. Upon binding of the UvrA(2)B(2) complex to a putative damaged site, the DNA wraps around one UvrB monomer. DNA wrap is dependent on ATP binding by UvrB and probably causes local melting of the DNA helix, facilitating insertion of UvrB beta-hairpin between the DNA strands. Then UvrB probes one DNA strand for the presence of a lesion. If a lesion is found the UvrA subunits dissociate and the UvrB-DNA preincision complex is formed. This complex is subsequently bound by UvrC and the second UvrB is released. If no lesion is found, the DNA wraps around the other UvrB subunit that will check the other stand for damage. This Photobacterium profundum (strain SS9) protein is UvrABC system protein B.